We begin with the raw amino-acid sequence, 100 residues long: Large ribosomal subunit protein bL27 (100 aa).

The propeptide occupies 1–9 (MLSINLSLC).

It belongs to the bacterial ribosomal protein bL27 family. Post-translationally, the N-terminus is cleaved by ribosomal processing cysteine protease Prp.

The chain is Large ribosomal subunit protein bL27 from Clostridium acetobutylicum (strain ATCC 824 / DSM 792 / JCM 1419 / IAM 19013 / LMG 5710 / NBRC 13948 / NRRL B-527 / VKM B-1787 / 2291 / W).